A 308-amino-acid polypeptide reads, in one-letter code: Taste receptor type 2 member 46 (308 aa).

Met1 is a topological domain (extracellular). A helical membrane pass occupies residues 2 to 22; that stretch reads ITFLSITFSILVGVIFVIGNF. The Cytoplasmic segment spans residues 23 to 46; sequence ANGFIALVNSIEWVKRQKISFADQ. A helical membrane pass occupies residues 47–67; it reads ILTGLAVSRVGLLWVLLLHLY. The Extracellular segment spans residues 68-86; sequence ATEFNLAFYSVEVRITAYN. The chain crosses the membrane as a helical span at residues 87-107; sequence VWIVTNHFSNWLSTSLSMFYL. The Cytoplasmic portion of the chain corresponds to 108-126; that stretch reads LKIATFSNLIFLHLKRKVK. A helical transmembrane segment spans residues 127 to 147; sequence SVILVTLLGPLLFLVCHLFVM. Residues 148–178 lie on the Extracellular side of the membrane; it reads NMNHIVWRKEYEGNITWRIKLRSAMYLSNVT. Asn161 and Asn176 each carry an N-linked (GlcNAc...) asparagine glycan. Residues 179–199 traverse the membrane as a helical segment; sequence VTMLANLIPLTLTLMSFLLLI. Over 200-229 the chain is Cytoplasmic; the sequence is CSLCKHLKKMQVHGKGSQDPSTKVHIKALQ. Residues 230 to 250 form a helical membrane-spanning segment; the sequence is TVTSFLLLCAIYFLSMILSVW. At 251–258 the chain is on the extracellular side; the sequence is NFELEKKP. A helical membrane pass occupies residues 259-279; that stretch reads VFMFCQAVIFSYPSTHPLILI. Residues 280-308 are Cytoplasmic-facing; the sequence is WGNKKLKQIFLSVLWNVRYWVKGQKPSSP.

This sequence belongs to the G-protein coupled receptor T2R family.

The protein localises to the membrane. The protein resides in the cell projection. It is found in the cilium membrane. Functionally, receptor that may play a role in the perception of bitterness and is gustducin-linked. May play a role in sensing the chemical composition of the gastrointestinal content. The activity of this receptor may stimulate alpha gustducin, mediate PLC-beta-2 activation and lead to the gating of TRPM5. In airway epithelial cells, binding of bitter compounds increases the intracellular calcium ion concentration and stimulates ciliary beat frequency. The chain is Taste receptor type 2 member 46 (TAS2R46) from Macaca mulatta (Rhesus macaque).